We begin with the raw amino-acid sequence, 317 residues long: Transaldolase (317 aa).

Lys-132 acts as the Schiff-base intermediate with substrate in catalysis.

It belongs to the transaldolase family. Type 1 subfamily. In terms of assembly, homodimer.

The protein resides in the cytoplasm. The catalysed reaction is D-sedoheptulose 7-phosphate + D-glyceraldehyde 3-phosphate = D-erythrose 4-phosphate + beta-D-fructose 6-phosphate. It functions in the pathway carbohydrate degradation; pentose phosphate pathway; D-glyceraldehyde 3-phosphate and beta-D-fructose 6-phosphate from D-ribose 5-phosphate and D-xylulose 5-phosphate (non-oxidative stage): step 2/3. Transaldolase is important for the balance of metabolites in the pentose-phosphate pathway. This is Transaldolase from Shewanella frigidimarina (strain NCIMB 400).